Here is a 9904-residue protein sequence, read N- to C-terminus: MNYRDKIQKFSIRKYTVGTFSTVIATLVFLGFNTSQAHAAETNQPASVVKQKQQSNNEQTENRESQVQNSQNSQNSQSLSATHENEQPNISQANLVDQKVAQSSTTNDEQPASQNVNTKKDSATAATTQPDKEEGKHKQNESQSANKNGNDNRAAHLENHEANVVTASDSSDNGNVQHDRNELQAFFDANYHDYRFIDRENADSGTFNYVKGIFEKINTLLGSNDPINNKDLQLAYKELEQAVALIRTMPQRQQTSRRSNRIQTRSVESRAAEPRSVSDYQNANSSYYVENANDGSGYPVGTYINASSKGAPYNLPTTPWNTLKASDSKEIALMTAKQTGDGYQWVIKFNKGHAPHQNMIFWFALPADQVPVGRTDFVTVNSDGTNVQWSHGAGAGANKPLQQMWEYGVNDPDRSHDFKIRNRSGQVIYSWPTVHVYSLEDLSRASDYFSEAGATAATKAFGRQNFEYINGQKPAESPGVPKVYTFIGQGDASYTISFKTQGPTVNKLYYAAGGRALEYNQLFMYSQLYVESTQDHQQRLNGLRQVVNRTYRIGTTKRVEVSQGNVQTKKVLESTNLNIDGFVDDPLSYVKTPSNKVLGFYPTNATTNAFRPGGVQELNEYQLSQLFTDQKLQEAARTRNPIRLMIGFDYPDGYGNSETLVPVNLTVLPEIQHNIKFFKNDDTQNIAEKPFSKQAGHPVFYVYAGNQGNASVNLGGSVTSIQPLRINLTSNENFTDKDWQITGIPRTLHIENSTNRTNNARERNIELVGNLLPGDYFGTIRFGRKEQLFEIRVKPHTPTITTTAEQLRGTALQKVPVNISGIPLDPSALVYLVAPTNQTTNGGSEADQIPSGYTILATGTPDGVHNTITIRPQDYVVFIPPVGKQIRAVVYYNKVVASNMSNAVTILPDDIPPTINNPVGINAKYYRGDEVNFTMGVSDRHSGIKNTTITTLPNGWTSNLTKSDNKNGSLAITGRVSMNQAFNSDITFKVSATDNVNNTTNDSQSKHVSIHVGKISEDAHPIVLGNTEKVVVVNPTAVSNDEKQSIITAFMNKNQNIRGYLASTDPVTVDNNGNVTLHYRDGSSTTLDATNVMTYEPVVKSEYQTANAAKTATVTIAKGQSFNIGDIKQYFTLSNGQAIPSGTFTNITSDRTILTAQEVSQMNAGTQLYHIVASNAYHKDTEDFYISLKIVDVKQPEGDQRVYRTSTYDLTTDEISKVKQAFINANRDVITLAEGNISVTNTPNGANVSTITVNINKGRLTKSFASNLANMNFLRWVNFPQDYTVTWTNAKIANRPTDGGLSWSDDHKSLIYRYDATLGTQITTNDILTMLKATTTVPGLRNNITGNEKAQAEAGGRPNFRTTGYSQSNATTDGQRQFTLNGQVIQVLDIINPSNGYGGQPVTNSNTRANHSNSTVVNVNEPAANGASAFTIDHVVKSNSTHNASDAVYKAQLYLTPYGPKQYVEHLNQNTGNTTDAINIYFVPSDLVNPTISVGNYTNHQVFSGETFTNTITANDNFGVQSVTVPNTSQITGTVDNNHQHVSATAPNVTSATNKTINLLATDTSGNTATTSFNVTVKPLRDKYRVGTSSTAANPVRIANISNNATVSQADQTAIINSLTFTETVPNRSYARASANEITSKTVSNVSRTGNNANVTVTATYQDGTTSTVTVPVKHVIPEIVAHSHYTVQGQDFPAGNGSSASDYFKLSNGSAIPDATITWVSGQAPNKDNTRIGEDITVTAHILIDGETTPITKTATYKVVSTVPKHVFETNRGAVFPGVSDVYDAKQYVKPVNDSWTQNAQRMNFQFTNSYGPSKDVVGISTRDIRVTYDNHQTQIIKILAKVKPDPPRIDGNSVTYKAGLTNQQIKINNVLSSSSIKLFKADNTPLTITNTTYGSGNTAVVTVSDALPNGVIKARSSITMNNVTYTTQDEHGRAIDVTRNESVDSNDSATVTVTPQLQATTEGAVFIKGGDGFDFGHVERFIQNPPHGATVAWHDSPDTWKNTVGNTHKTAVVTLPNGQGTRNVEVPVKVYPVANAKAPSRDVKGQNLTNGTDAMNYITFDPNTNTNGITAAWANRQQPNNQQAGVQHLNVDVTYPGISAAKRVPVTVNVYQFEFPQTTYTTTVGGTLASGTQASGYAHMQNATGLPTDGFTYKWNRDTTGTNDANWSAMNKPNVAKVVNAKYDVIYNGHTFATSLPAKFVVKDVQPAKPTVTETAAGAITIAPGANQTVNTHAGNVTTYADKLVIKRNGNVVTTFTRRNNTSPWVKEASAATVAGIAGTNNGITVAAGTFNPADTIQVVATQGSGETVSDEQRSDDFTVVAPQPNQATTKIWQNGHIDITPNNPSGHLINPTQAMDIAYTEKVGNGAEHSKTINVVRGQNNQWTIANKPDYVTLDAQTGKVTFNANTIKPNSSITITPKAGTGHSVSSNPSTLTAPAAHTVNTTEIVKDYGSNVTAAEINNAVQVANKRTATIKNGTAMPTNLAGGSTTTIPVTVTYNDGSTEEVQESIFTKADKRELITAKNHLDDPVSTEGKKPGTITQYNNAIHNAQQQINTAKTEAQQVINNDRATPQQVSDALTKVRAAQTKIDQAKALLQNKEDNSQLVTSKNNLQSSVNQVPSTAGMTQQSIDNYNAKKREAETEITAAQRVIDNGDATPQQISEEKHRVDNALTALNQAKQNLTADTHTLEQAVQQLNRTGTTTGKKPASITAYNNSMHALQAELTSAKNSANAIIQKPIRSVQEVQTALTNVNRVNERLTQAINQLVPLADNSALRTAKTKLDEEINKSVTTDGMTQSSIQAYENAKRAGQTESTNAQNVINNGDATDQQIAEEKTKVEEKYNSLKQAIAGLTPDLAPLQTAKTQLQNDIDQPTSTTGMTSTSIAAFNEKLSAARTKIQEIDRVLASHPDVATIRQNVTAANAAKTALDQARNGLTVDKAPLENAKNQLQHSIDTQTSTTGMTQDSINAYNAKLTAARNKIQQINQVLAGSPTVEQINTNTSAANQAKSDLDHARQALTPDKAPLQTAKTQLEQSINQPTDTTGMTTASLNAYNQKLQAARQKLTEINQVLNGNPTVQNINDKVTEANQAKDQLNTARQGLTLDRQPALTTLHGASNLNQAQQNNFTQQINAAQNHAALETIKSNITALNTAMTKLKDSVADNNTIKSGQNYTDATPANKQAYDNAVNAAKGVIGETTNPTMDVNTVNQKAASVKSTKDALDGQQNLQRAKTEATNAITHASDLNQAQKNALTQQVNSAQNVHAVNDIKQTTQSLNTAMTGLKRGVANHNQVVQSDNYVNADTNKKNDYNNAYNHANDIINGNAQHPVITPSDVNNALSNVTSKEHALNGEAKLNAAKQEANTALGQLNNLNNAQRQNLQSQINSAHQIETVNTIKQNATNLNSAMGNLRQAVADKDQVKRTEDYADADTAKQNAYNSAVSSAETIINQTTNPTMSVDDVNRATSAVTSNKNALNGDEKLAQSKTDAARAIDALPHLNNAQKADVKSKINAASNIAGVNTVKQQGTDLNTAMGNLQGAINDEQTTLNSQNYQDATPSKKTAYTNAVQAAKDILNKSNGQNKTKDQVTEAMNQLNSAKNNLDGTRLLDQAKQTAKQQLNNMTHLTTAQKTNLTNQINSGTTVAGVHTVQSNANTLDQAMNTLRQSIANKDATKASEDYVDANNDKQTAYNNAVAAAETIINANSNPEMNPSTITQKAEQVNSSKTALNGDENLATAKQNAKTYLNTLTSITDAQKNNLISQISSATRVSGVDTVKQNAQHLDQAMASLQSGINNESQVKSSEKYRDADTNKQQEYDNAITAAKAILNKQHGPNTAQNAVEAALQRVNTAKDALNGDAKLIAAQNAAKQHLGTLTHITTAQRNDLTNQISQATNLAGVESVKQNANSLDGAMGNLQTAINDKSGTLASQNFLDADEQKRNAYNQAVSAAETILNKQTGPNTAKTAVEQALNNVNNAKHALNGTQNLNNAKQAAITAINGASDLNQHQKDALKAQANGAQRVSNAQDVQRNATELNTAMGTLKHAIADKTNTLASSKYVNADSTKQNAYTTKVTNAEHIISGTPTVVTTPSEVTAAANQVNSAKQELNGDERLRVAKQNANTAIDALTQLNTPQKAKLKEQVGQANTLDDAMNSLQGAINDKDATLRNQNYLDADESKRNAYTQAVTAAEGILNKQTGGNTSKADVDNALNAVTRAKAALNGAENLRNAKTSATNTINGLPNLTQLQKDNLKHQVEQAQNVAGVNGVKDKGNTLNTAMGALRTSIQNDNTTKTSQNYLDASDSNKNNYNTAVNNANGVINATNNPNMDANAINGMANQVNTTKAALNGVQNLAQAKTNATNTINNAHDLNQKQKDALKTQVNNAQRVSDANNVQHTATELNGAMTALKAAIADKERTKASGNYVNADQEKRQAYDSKVTNAENIINGTPNATLTVNDVNSATSQVNAAKTALNGDNNLRVAKENANNTIDGLAQLNNAQKAKLKEQVQSATTLEGVQTVKNSSQTLNTAMKGLRDSIANEATIKAGQNYTDASPTNRNEYDSAVTAAKAIINQTSNPTMEPNTITQATSQVTTKEHALNGAQNLAQAKTTAKNNLNNLTSINNAQKDALTRSIDGATTVAGVNQETAKATELNNAMHSLQNGINDETQTKQTQKYLDAEPNKKSAYDQAVNAAKAILTKASGQNVDKAAVEQALQNVNSTKTALNGDAKLNEAKAAAKQTLGTLTHINNAQRNALDNEITQATNVEGVNTVKAKAQQLDGAMGQLETSIRDKDTTLQSQNYQDADDAKRTAYSQAVNAAATILNKTAGGNTPKADVERAMQAVAQANTALNGIQNLERAKQAANTAITNASDLNTKQKEALKAQVTSAGRVSAANGVEHTATEINTAMTALKRAIADKADTKTSGNYVNADANKRQAYDEKVTAAESIVNGTPTPTLTPSDVTNAATQVTNAKTQLNGNHNLEVAKQNANTAIDGLTSLNGPQKAKLKEQVGQATTLPNVQTVRDNAQTLNTAMKGLRDSIANEATIKAGQNYTDASPNNRSEYDSAVTAAKAIIGQTTSPSMNAQEINQAKDQVTAKQQALNGQENLRTAQTNAKQHLNGLSDLTNAQKEAAKRQIEGATHVNEVTQAQNNADALNTAMTNLKNGIQDQNTIKQGVNFTDADEAKRNAYTNAVTQAEQILNKAQGPNTAKDNVESALQNVQRAKNELNGNQNVANAKTTAKNALNNLTSINNAQKEALKSQIEGATTVAGVNQVSTTASELNTAMSNLQRGINDEAATKAAQKYTDADRDKQTAYNDAVTAAKTLLDKTAGTNENKAAVEQALQRVNTAKTALNGDARLNEAKNTAKQQVATMSHLTDAQKANLTSQIESGTTVAGVQGIQANAGTLDQAMNQLRQSIASKDATKSSEDYQDANADLQNAYNDAVTNAEGIISATNNPEMNPDTINQKASQVNSAKSALNGDEKLAAAKQTAKSDIGRLTDLNNAQRTAANAEVDQAPNLAAVTAAKNKATSLNTAMGNLKHALAEKDNTKRSVNYTDADQPKQQAYDTAVTQAEAITNANGSNANETTVQAALNQLNQAKNDLNGDNKVAQAKESAKRALASYSNLNNAQSTAATSQIDNATTVAGVTAAQNTANELNTAMGQLQNGINDQNTVKQQVNFTDADQGKKDAYTNAVTNAQGILDKANGQNMTKAQVEAALNQVTTAKNALNGDANVRQAKSDAKANLGTLTHLNNAQKQDLTSQIEGATTVNGVNSVKTKAQDLDGAMQRLESAIANKDQTKASENYIDADPTKKTAFDNAITQAESYLNKDHGTNKDKQAVEQAIQSVTSTENALNGDANLQRAKTEATQAIDNLTHLNTPQKTALKQQVNAAQRVSGVTDLKNSATSLDNAMDQLKQGIADHDTIVAGGNYTNASPDKQGAYTDAYNAAKNIVNGSPNVITNAADVTAATQRVNNAETSLNGDSNLATAKQQAKDALRQMTHLSDAQKQSITGQIDSATQVTGVQSVKDNATNLDNAMNQLRNSIANKDEVKASQPYVDADTDKQNAYNTAVTSAENIINATSQPTLDPSAVTQAANQVNTNKTALNGAQNLANKKQETTANINQLSHLNNAQKQDLNTQVTNAPNISTVNQVKTKAEQLDQAMERLINGIQDKDQVKQSVNFTDADPEKQTAYNNAVTAAENIINQANGTNANQSQVEAALSTVTTTKQALNGDRKVTDAKNNANQTLSTLDNLNNAQKGAVTGNINQAHTVAEVTQAIQTAQELNTAMGNLKNSLNDKDTTLGSQNFADADPEKKNAYNEAVRNAENILNKSTGTNVPKDQVEAAMNQVNTTKAALNGTQNLEKAKQHANTAIDGLSHLTNAQKEALKQLVQQSTTVAEAQGNEQKANNVDAAMDKLRQSIADNATTKQNQNYTDASPNKKDAYNNAVTTAQGIIDQTTSPTLDPTVINQAAGQVSTTKNALNSNENLEAAKQQATQSLGSLDNLNNAQKQAVTDQINGAHTVDEANQIKQNAQNLNTAMGNLKQAIADKDATKATVNFTDADQAKQQAYNTAVTNAENIISKANGGNATQTEVEQAIQQVNAAKQALNGNANVQHAKDEATALINSSNDLNQAQKNALKQQVQNATTVAGVNNVKQTAQELNNAMTQLKQGIADKEQTKADGNFVNADPDKQNAYNQAVAKAEALISGTPDVVVTPSEITAALNKVTQAKNDLNGNTNLATAKQNVQHAIDQLPNLNQAQRDEYNKQITQATHVPNVNAIQQAATTLNDAMTQLKQGIANKAQIKGSENYHDADTDKQTAYDNAVTKAEELLKQTTNPTMDPNTIQQALTKVNDTNQALNGNQKLADAKQAAKTNLGTLDHLNDAQKQALTTQVEQAPDIATVNNVKQNAQNLNNAMTNLNNALQDKTETLNSINFTDADQAKKDAYTNAVSHAEGILSKANGSNASQTEVEQAMQRVNEAKQALNGNDNVQRAKDAAKQVITNANDLNQAQKDALKQQVDAAQTVANVNTIKQTAQDLNQAMTQLKQGIADKDQTKANGNFVNADTDKQNAYNNAVAHAEQIISGTPNANVDPQQVAQALQQVNQAKGDLNGNHNLQVAKDNANTAIDQLPNLNQPQKTALKDQVSHAELVTGVNAIKQNADALNNAMGTLKQQIQANSQVPQSVDFTQADQDKQQAYNNAANQAQQIANGTPTPVLAPDTVTQAVTTMNQAKDALNGDEKLAQAKQDALANLDTLRDLNQPQRDALRNQINQAQALATVEQTKQNAQNVNTAMGNLKQGIANKDTVKASENYHDADVDKQTAYTNAVSQAEGIINQTTNPTLNPDDITRALTQVTDAKNSLNGEAKLATEKQNAKDAVNAMTHLNDAQKQALKGQIDQSPEIATVNQVKQTATSLDHAMDQLSQAINDKAQTLADGNYLNADPDKQNAYKQAVAKAEALLNKQSGTNEVQAQVESITNEVNAAKQALNGNDNLANAKQQAKQQLANLTHLNDAQKQSFESQITQAPLVTDVTTINQKAQTLDHAMELLRNSVADNQTTLASEDYHDATAQRQNDYNQAVTAANNIINQTTSPTMNPDDVNGATTQVNNTKVALDGDENLAAAKQQANNRLDQLDHLNNAQKQQLQSQITQSSDIAAVNGHKQTAETLNTAMGNLINAIADHQAVEQRGNFINADTDKQTAYNTAVNEAAAMINKQTGQNANQTEVEQAITKVQTTLQALNGDHNLQVAKTNATQAIDALTSLNDPQKTALKDQVTAATLVTAVHQIEQNANTLNQAMHGLRQSIQDNAATKANSKYINEDQPEKQNYDQAVQAANNIINEQTATLDNNAINQAAATVNTTKAALHGDVKLQNDKDHAKQTVSQLAHLNNAQKHMEDTLIDSETTRTAVKQDLTEAQALDQLMDALQQSIADKDATRASSAYVNAEPNKKQAYDEAVQNAESIIAGLNNPTINKGNVSSATQAVTSSKNALDGVERLAQDKQTAGNSLNHLDQLTPAQQQALENQINNATTRDKVAEIIAQAQALNEAIKALKESIKDQPQTEASSKFINEDQAQKDAYTQAVQHAKDLINKTTDPTLAKSIIDQATQAVTDAKNNLHGDQKLAQDKQRATETLNNLSNLNTPQRQALENQINNAATRVEVAQKLTEAQALNQAMEALRNSIQDQQQTEAGSKFINEDKPQKDAYQAAVQNAKDLINQTNNPTLDKAQVEQLTQAVNQAKDNLHGDQKLADDKQHAVTDLNQLNGLNNPQRQALESQINNAATRDEVAQKLAEAKALDQAMQALRNSIQDQQQTESGSKFINEDKPQKDAYQAAVQNAKDLINQTGNPTLDKAQVEQLTQAVTTAKDNLHGDQKLARDQQQAVTTVNALPNINHAQQQALTDAINAAPTRTEVAQHVQTATELDHAMETLKNKVDQVNTDKAQPNYTEASTDKKEAVDQALQAAESITDPTNGSNANKDAVEQALTKLQEKVNELNGDERVAEAKTQAKQNIDQLTHLNADQIATAKQNIDQATQLQPIAELVDQATQLNQSMDQLQQAVNDHTNVEQTVDYTQADSDKQKAYKQAIADAENVLKQNANKQQVDQALQNILNAKQALNGDERVALAKTNGKHDIDQLNALNNAQQDGFKGRIDQSNDLNQIQQIVDEAKALNRAMDQLSEEITGNEGRTKGSTNYVNADTQVKQVYDEAVDKAKQALDKSTGQNLTAEQVIKLNDAVTAAKQALNGEERLNNRKSEALQRLDQLTHLNNAQRQLAIQQINNAETLNKASRAINRATKLDNAMGAVQQYIDEQHLGVISSTNYINADDNLKANYDNAIANAAHELDKVQGNAIAKAEAEQLKQNIIDAQNALNGDQNLANAKDKANAFVNSLNGLNQQQQDLAHKAINNADTVSDVTDIVNNQIDLNDAMETLKHLVDNEIPNAEQTVNYQNADDNAKTNFDDAKRLANALLNSDNTNVNDINGAIQAVNDAIHNLNGDQRLQDAKDKAIQSINQALANKLKEIEASNATDQDKLIAKNKAEELANSIINNINKATSNQDVSQVQTAGNHAIEQVHANEIPKAKIDANKDVDKQVQALIDEIDRNPNLTDKEKQALKDRINQILQQGHNDINNALTKEEIEQAKAQLAQALQEIKDLVKAKENAKQDVDKQVQALIDEIDQNPNLTDKEKQALKDRINQILQQGHNDINNAMTKEEIEQAKAQLAQALQDIKDLVKAKEDAKNAIKALANAKRDQINSNPDLTPEQKAKALKEIDEAEKRALQNVENAQTIDQLNRGLNLGLDDIRNTHVWEVDEQPAVNEIFEATPEQILVNGELIVHRDDIITEQDILAHINLIDQLSAEVIDTPSTATISDSLTAKVEVTLLDGSKVIVNVPVKVVEKELSVVKQQAIESIENAAQQKINEINNSVTLTLEQKEAAIAEVNKLKQQAIDHINNAPDVHSVEEIQQQEQAHIEQFNPEQFTIEQAKSNAIKSIEDAIQHMIDEIKARTDLTDKEKQEAIAKLNQLKEQAIQAIQRAQSIDEITEQLEQFKAQMKAANPTAKELAKRKQEAISRIKDFSNEKMNSIRNSEIGTADEKQAAMNQINEIVLETIRDINNAHTLQQVEAALNNGIARISAVQIVISDRAKQSSSTGNESNSHLTIGYGTANHPFNSSTIGHKKKIDEDDDIDPLHMRHFSNNFGNVIKNAIGVVGISGLLASFWFFIAKRRRKEDEEEELEIRDNNKDSIKETLDDTKHLPLLFAKRRRKEDEEDVTVEEKDSLNNGESLDKVKHTPFFLPKRRRKEDEEDVEVTNENTDEKVLKDNEHSPLLFAKRRKDKEEDVETTTSIESKDEDVPLLLAKKKNQKDNQSKDKKSASKNTSKKVAAKKKKKKSKKNKK.

The first 39 residues, 1-39, serve as a signal peptide directing secretion; it reads MNYRDKIQKFSIRKYTVGTFSTVIATLVFLGFNTSQAHA. Polar residues predominate over residues 41-59; the sequence is ETNQPASVVKQKQQSNNEQ. 2 disordered regions span residues 41–153 and 250–277; these read ETNQ…NDNR and PQRQ…PRSV. The segment covering 65–78 has biased composition (low complexity); the sequence is SQVQNSQNSQNSQS. Over residues 79–117 the composition is skewed to polar residues; the sequence is LSATHENEQPNISQANLVDQKVAQSSTTNDEQPASQNVN. Residues 130–140 show a composition bias toward basic and acidic residues; that stretch reads PDKEEGKHKQN. Polar residues-rich tracts occupy residues 141 to 151 and 250 to 266; these read ESQSANKNGND and PQRQ…QTRS. 53 FIVAR domains span residues 2524–2580, 2610–2666, 2687–2750, 2780–2836, 2864–2919, 2947–3002, 3030–3085, 3154–3212, 3280–3339, 3407–3465, 3533–3591, 3659–3717, 3785–3843, 3911–3969, 4037–4095, 4160–4208, 4276–4334, 4402–4460, 4528–4586, 4654–4712, 4780–4838, 4906–4964, 5032–5090, 5158–5216, 5284–5342, 5410–5468, 5536–5593, 5661–5719, 5787–5845, 5913–5971, 6039–6097, 6175–6223, 6291–6349, 6417–6475, 6543–6601, 6669–6727, 6795–6853, 6921–6979, 7047–7105, 7173–7231, 7299–7357, 7425–7486, 7551–7609, 7677–7735, 7803–7860, 7928–7986, 8054–8112, 8180–8238, 8306–8364, 8432–8490, 8558–8612, 8680–8739, and 8934–8990; these read AKNH…VSDA, SKNN…ISEE, DTHT…VQTA, AKTK…IAEE, AKTQ…IRQN, AKNQ…INTN, AKTQ…INDK, AMTK…VNQK, AMTG…VNNA, AMGN…VNRA, AMGN…VTEA, AMNT…ITQK, AMAS…VEAA, AMGN…VEQA, AMGT…VTAA, DKDA…VDNA, AMGA…INGM, AMTA…VNSA, AMKG…ITQA, AMHS…VEQA, AMGQ…VERA, AMTA…VTNA, AMKG…INQA, AMTN…VESA, AMSN…VEQA, AMNQ…INQK, AMGN…VQAA, AMGQ…VEAA, AMQR…VEQA, AMDQ…VTAA, AMNQ…VTQA, DKDQ…VEAA, AMGN…VEAA, AMDK…INQA, AMTQ…ITAA, AMTQ…IQQA, AMTN…VEQA, AMTQ…VAQA, AMGT…VTQA, AMGN…ITRA, AMDQ…ITNE, AMEL…VNGA, AMHG…INQA, LMDA…VSSA, AIKA…IDQA, AMEA…VEQL, AMQA…VEQL, AMET…VEQA, SMDQ…VDQA, AMDQ…VIKL, and AMET…INGA. A helical transmembrane segment spans residues 9710–9730; the sequence is IKNAIGVVGISGLLASFWFFI. Positions 9807–9904 are disordered; it reads RRKEDEEDVE…KKKKSKKNKK (98 aa). Basic and acidic residues-rich tracts occupy residues 9822 to 9832 and 9871 to 9881; these read TDEKVLKDNEH and QKDNQSKDKKS. Basic residues predominate over residues 9886–9904; the sequence is TSKKVAAKKKKKKSKKNKK.

It localises to the cell membrane. This is Extracellular matrix-binding protein ebh (ebh) from Staphylococcus aureus (strain MW2).